Here is a 213-residue protein sequence, read N- to C-terminus: G2/mitotic-specific cyclin-1 (213 aa).

The segment at 1–23 (MKFSEEKNVSNNPTNFEGGLDSR) is disordered.

It belongs to the cyclin family. Cyclin AB subfamily. Interacts with the CDC2 protein kinase to form a serine/threonine kinase holoenzyme complex also known as maturation promoting factor (MPF). The cyclin subunit imparts substrate specificity to the complex. As to expression, only expressed in organs with dividing cells.

Its function is as follows. Essential for the control of the cell cycle at the G2/M (mitosis) transition. This Medicago sativa (Alfalfa) protein is G2/mitotic-specific cyclin-1.